Consider the following 600-residue polypeptide: UPF0588 membrane protein C20F10.02c (600 aa).

Transmembrane regions (helical) follow at residues 409–429 and 437–457; these read LSATMYFLYFSFVYRAMTSLV and YHWLELWRVLFSFLDFVSVLI.

Belongs to the UPF0588 family.

It localises to the membrane. The sequence is that of UPF0588 membrane protein C20F10.02c from Schizosaccharomyces pombe (strain 972 / ATCC 24843) (Fission yeast).